The sequence spans 491 residues: Polybrominated aromatic compounds synthase (491 aa).

Residue C437 participates in heme binding.

It belongs to the cytochrome P450 family. The cofactor is heme.

Cytochrome P450 protein involved in the biosynthesis of polybrominated aromatic organic compounds. In the presence of ferredoxin, ferredoxin reductase and NADH, catalyzes the coupling of bromophenols and bromopyrroles, forming various polybrominated biphenyls and hydroxylated polybrominated diphenyl ethers (OH-BDE). Can also mediate the heterocoupling of 3,5-dibromocatechol. Can also use chlorinated phenolic substrates. 2,3,4-tribromopyrrole could be the physiological substrate. The polypeptide is Polybrominated aromatic compounds synthase (Pseudoalteromonas luteoviolacea (strain 2ta16)).